Here is a 147-residue protein sequence, read N- to C-terminus: UPF0306 protein YhbP (147 aa).

It belongs to the UPF0306 family.

This chain is UPF0306 protein YhbP, found in Escherichia coli (strain K12 / MC4100 / BW2952).